We begin with the raw amino-acid sequence, 551 residues long: Hydroxymethylpyrimidine/phosphomethylpyrimidine kinase THI20 (551 aa).

Gln-64 serves as a coordination point for 4-amino-5-hydroxymethyl-2-methylpyrimidine. Cys-468 acts as the Nucleophile in catalysis. The Proton donor role is filled by Glu-540.

It in the N-terminal section; belongs to the ThiD family. This sequence in the C-terminal section; belongs to the thiaminase-2 family.

It carries out the reaction 4-amino-5-hydroxymethyl-2-methylpyrimidine + ATP = 4-amino-2-methyl-5-(phosphooxymethyl)pyrimidine + ADP + H(+). The enzyme catalyses 4-amino-2-methyl-5-(phosphooxymethyl)pyrimidine + ATP = 4-amino-2-methyl-5-(diphosphooxymethyl)pyrimidine + ADP. The catalysed reaction is thiamine + H2O = 5-(2-hydroxyethyl)-4-methylthiazole + 4-amino-5-hydroxymethyl-2-methylpyrimidine + H(+). It functions in the pathway cofactor biosynthesis; thiamine diphosphate biosynthesis; 4-amino-2-methyl-5-diphosphomethylpyrimidine from 5-amino-1-(5-phospho-D-ribosyl)imidazole: step 2/3. It participates in cofactor biosynthesis; thiamine diphosphate biosynthesis; 4-amino-2-methyl-5-diphosphomethylpyrimidine from 5-amino-1-(5-phospho-D-ribosyl)imidazole: step 3/3. Its function is as follows. Trifunctional protein with both thiamine biosynthetic and degradative activity. Within the thiamine biosynthesis pathway, catalyzes the phosphorylation of hydroxymethylpyrimidine (HMP) to hydroxymethylpyrimidine phosphate (HMP-P), as well as of HMP-P to HMP-PP. Also has thiaminase II activity and degrades thiamine using water as the nucleophile, resulting only in the formation of HMP (4-amino-2-methyl-5-hydroxymethylpyrimidine) and Thz (4-methyl-5-thiazole ethanol). The sequence is that of Hydroxymethylpyrimidine/phosphomethylpyrimidine kinase THI20 from Saccharomyces cerevisiae (strain ATCC 204508 / S288c) (Baker's yeast).